The primary structure comprises 338 residues: Mitochondrial E3 ubiquitin protein ligase 1 (338 aa).

The Cytoplasmic segment spans residues 1–3; that stretch reads MEF. Residues 4–24 traverse the membrane as a helical segment; the sequence is LHESVALGVDLLILGLCAREY. Topologically, residues 25–227 are mitochondrial intermembrane; it reads VHYKRTAKVL…LIKRFEDAKT (203 aa). Residues 228 to 248 traverse the membrane as a helical segment; that stretch reads TTILKLVVCSTISAILVAFIA. Topologically, residues 249–338 are cytoplasmic; sequence KKLYRKRKQE…IVSKAAAFIA (90 aa). The RING-type zinc finger occupies 290–326; the sequence is CVVCSTNPKEIILLPCGHVCLCEDCAQKISVTCPVCR.

Interacts with Marf. Post-translationally, auto-ubiquitinated.

Its subcellular location is the mitochondrion outer membrane. The enzyme catalyses S-ubiquitinyl-[E2 ubiquitin-conjugating enzyme]-L-cysteine + [acceptor protein]-L-lysine = [E2 ubiquitin-conjugating enzyme]-L-cysteine + N(6)-ubiquitinyl-[acceptor protein]-L-lysine.. Functionally, exhibits weak E3 ubiquitin-protein ligase activity. E3 ubiquitin ligases accept ubiquitin from an E2 ubiquitin-conjugating enzyme in the form of a thioester and then directly transfer the ubiquitin to targeted substrates. Plays a role in the control of mitochondrial morphology by promoting mitochondrial fission. Negatively regulates the mitochondrial fusion protein marf by promoting its ubiquitination, acting in a pathway that is parallel to the park/pink1 regulatory pathway. This chain is Mitochondrial E3 ubiquitin protein ligase 1, found in Drosophila melanogaster (Fruit fly).